The following is a 976-amino-acid chain: MSNSNTTQETLEIMKESEKKLVEESVNKNKFISKTPSKEEIEKECEDTSLRQETQRRTSNHGHARKRAKSNSKLKLVRSLAVCEESSTPFADGPLETQDIIQLHISCPSDKEEEKSTKDVSEKEDKDKNKEKIPRKMLSRDSSQEYTDSTGIDLHEFLVNTLKKNPRDRMMLLKLEQEILEFINDNNNQFKKFPQMTSYHRMLLHRVAAYFGMDHNVDQTGKAVIINKTSNTRIPEQRFSEHIKDEKNTEFQQRFILKRDDASMDRDDNQTGQNGYLNDIRLSKEAFSSSSHKRRQIFRGNREGLSRTSSSRQSSTDSELKSLEPRPWSSTDSDGSVRSMRPPVTKASSFSGISILTRGDSIGSSKGGSAGRISRPGMALGAPEVCNQVTSSQSVRGLLPCTAQQQQQQQQQQLPALPPTPQQQPPLNNHMISQADDLSNPFGQMSLSRQGSTEAADPSAALFQTPLISQHPQQTSFIMASTGQPLPTSNYSTSSHAPPTQQVLPPQGYMQPPQQIQVSYYPPGQYPNSNQQYRPLSHPVAYSPQRGQQLPQPSQQPGLQPMMPNQQQAAYQGMIGVQQPQNQGLLSSQRSSMGGQMQGLVVQYTPLPSYQVPVGSDSQNVVQPPFQQPMLVPVSQSVQGGLPAAGVPVYYSMIPPAQQNGTSPSVGFLQPPGSEQYQMPQSPSPCSPPQMPQQYSGVSPSGPGVVVMQLNVPNGPQPPQNPSMVQWSHCKYYSMDQRGQKPGDLYSPDSSPQANTQMSSSPVTSPTQSPAPSPVTSLSSVCTGLSPLPVLTQFPRPGGPAQGDGRYSLLGQPLQYNLSICPPLLHGQSTYTVHQGQSGLKHGNRGKRQALKSASTDLGTADVVLGRVLEVTDLPEGITRTEADKLFTQLAMSGAKIQWLKDAQGLPGGGGGDNSGTAENGRHSDLAALYTIVAVFPSPLAAQNASLRLNNSVSRFKLRMAKKNYDLRILERASSQ.

Disordered stretches follow at residues 32–71 (ISKT…AKSN) and 105–147 (ISCP…QEYT). Over residues 36–56 (PSKEEIEKECEDTSLRQETQR) the composition is skewed to basic and acidic residues. The residue at position 37 (Ser37) is a Phosphoserine. Over residues 58–71 (TSNHGHARKRAKSN) the composition is skewed to basic residues. Basic and acidic residues predominate over residues 109 to 143 (SDKEEEKSTKDVSEKEDKDKNKEKIPRKMLSRDSS). Position 143 is a phosphoserine (Ser143). Residues 169 to 232 (RMMLLKLEQE…AVIINKTSNT (64 aa)) enclose the R3H domain. Residues 233–310 (RIPEQRFSEH…NREGLSRTSS (78 aa)) form the SUZ domain. Positions 257–269 (LKRDDASMDRDDN) are enriched in basic and acidic residues. Disordered regions lie at residues 257 to 376 (LKRD…ISRP), 401 to 457 (CTAQ…EAAD), 480 to 560 (ASTG…PGLQ), 661 to 725 (GTSP…PSMV), and 738 to 780 (RGQK…SLSS). The segment covering 306–317 (SRTSSSRQSSTD) has biased composition (low complexity). Residues Ser330, Ser333, and Ser349 each carry the phosphoserine modification. Over residues 401 to 415 (CTAQQQQQQQQQQLP) the composition is skewed to low complexity. 2 stretches are compositionally biased toward polar residues: residues 441–453 (PFGQ…QGST) and 480–504 (ASTG…QQVL). Positions 543-560 (SPQRGQQLPQPSQQPGLQ) are enriched in low complexity. The span at 682–691 (SPSPCSPPQM) shows a compositional bias: pro residues. Positions 692–714 (PQQYSGVSPSGPGVVVMQLNVPN) are enriched in low complexity. The span at 748–758 (PDSSPQANTQM) shows a compositional bias: polar residues. The span at 759–777 (SSSPVTSPTQSPAPSPVTS) shows a compositional bias: low complexity. A phosphoserine mark is found at Ser853 and Ser855. Phosphothreonine is present on residues Thr856 and Thr860.

It is found in the nucleus. In Homo sapiens (Human), this protein is R3H domain-containing protein 2 (R3HDM2).